Here is a 273-residue protein sequence, read N- to C-terminus: SPRY domain-containing SOCS box protein 4 (273 aa).

Residues 1 to 34 are disordered; it reads MGQKLSGSLKSVEVREPALRPAKRELRGAEPGRP. The segment covering 12-34 has biased composition (basic and acidic residues); the sequence is VEVREPALRPAKRELRGAEPGRP. Residues 34-233 form the B30.2/SPRY domain; that stretch reads PARLDQLLDM…MRYINGLDPE (200 aa). In terms of domain architecture, SOCS box spans 234–273; it reads PLPLMDLCRRSIRSALGRQRLQDISSLPLPQSLKNYLQYQ.

It belongs to the SPSB family. Component of the probable ECS(SPSB4) E3 ubiquitin-protein ligase complex which contains CUL5, RNF7/RBX2, Elongin BC complex and SPSB4. Interacts with CUL5; RNF7; ELOB and ELOC. Interacts with MET. Interacts (via B30.2/SPRY domain) with PAWR; this interaction occurs in association with the Elongin BC complex. Interacts with NOS2. Interacts with EPHB2.

The protein localises to the cytoplasm. Its subcellular location is the cytosol. Its pathway is protein modification; protein ubiquitination. Functionally, substrate recognition component of a SCF-like ECS (Elongin BC-CUL2/5-SOCS-box protein) E3 ubiquitin-protein ligase complex which mediates the ubiquitination and subsequent proteasomal degradation of target proteins. Negatively regulates nitric oxide (NO) production and limits cellular toxicity in activated macrophages by mediating the ubiquitination and proteasomal degradation of NOS2. Acts as a bridge which links NOS2 with the ECS E3 ubiquitin ligase complex components ELOC and CUL5. Diminishes EphB2-dependent cell repulsive responses by mediating the ubiquitination and degradation of EphB2/CTF2. Regulates cellular clock function by mediating the ubiquitin/proteasome-dependent degradation of the circadian transcriptional repressor NR1D1. This Homo sapiens (Human) protein is SPRY domain-containing SOCS box protein 4 (SPSB4).